The sequence spans 557 residues: Transcription factor fil1 (557 aa).

Positions 234-258 (SPVKRELNDSTSPSKLSESSSSLTG) are disordered. Residues 243–258 (STSPSKLSESSSSLTG) show a composition bias toward low complexity. 2 GATA-type zinc fingers span residues 365–390 (CFNC…CNAC) and 419–443 (CANC…CNAC).

It localises to the nucleus. Its subcellular location is the cytoplasm. Functionally, activates genes required for amino acid biosynthesis and acts as a master transcriptional regulator during amino acid starvation. Binds variations of the DNA sequence 5'-GAT[AC]GC-3'. This Schizosaccharomyces pombe (strain 972 / ATCC 24843) (Fission yeast) protein is Transcription factor fil1.